We begin with the raw amino-acid sequence, 209 residues long: Thymidylate kinase (209 aa).

10 to 17 (GPDGAGKT) provides a ligand contact to ATP.

Belongs to the thymidylate kinase family.

The catalysed reaction is dTMP + ATP = dTDP + ADP. Functionally, phosphorylation of dTMP to form dTDP in both de novo and salvage pathways of dTTP synthesis. The sequence is that of Thymidylate kinase from Pediococcus pentosaceus (strain ATCC 25745 / CCUG 21536 / LMG 10740 / 183-1w).